The chain runs to 756 residues: MDVRPKENFSQRQDTSAVRHRKTCKVNERAEIPSQPHNGTINGVNKRITKREGGEHISSPSRDAHVPVFILALVIVLSVSTRFYKITEPPHVCWDETHFGKMGSYYINRTFFFDVHPPLGKMLIGLAGYLTGYDGTFPFIKPGDKYEHHNYWGMRAFCAALGSCLPPFAFLVVLELSQSSTAALIAASLLIFDTGCITLSQYILLDPILMFFIMGSVLCMVKFNTQRLGPFSFSWWFWLLLTGLCLSGSLGVKFVGLFVILLVGINTALDLWRLLGDLSLSLVDFGKHLLARVFGLIMLPLFLYTTIFAIHFIVLNRSGPGDGFFSSAFQSRLIGNNLHNASMPEYLAYGSVITVKNLRIAGGYLHSHWHLYPEGVGAHQQQVTAYLHKDYNNLWLVKRLDNSDDLTGSPELVRHGDIIRLEHKETTRNLHSHFHEAPLTKKHLQVTGYGINGSGDVNDLWQVEVCGGRKGDPVKVLRSKVRFLHRATGCVLCSSGKTLPKWGWEQVEVTCSPYVKETPNSQWNIEDHINPKLPNISLAVLKPTFLEILWESHIVMIRGNSGLKPKDNEMNSKPWHWPINYQGLRFSGVNETEYRVYLLGNPVIWWLNLLSLALFVILLTVASLAVQRRVKMEGMMKVHCHTLMEGGGMLFLGWLLHYLPFYIMGRILYYHHYFPAMMFSSMLTGITLDILLQNLQLLFSSSLSHYLMRGGQSVLLLGFIYSFYLFHPLSYGMRGPLAHDSASSMAGLRWMESWEF.

Helical transmembrane passes span 64–84 (AHVP…TRFY), 110–130 (TFFF…AGYL), 156–176 (AFCA…VLEL), 179–199 (SSTA…CITL), 203–223 (ILLD…MVKF), 245–265 (CLSG…LVGI), and 293–313 (VFGL…IHFI). MIR domains lie at 344-400 (PEYL…VKRL), 410-466 (PELV…VEVC), and 471-528 (GDPV…IEDH). A run of 4 helical transmembrane segments spans residues 602-622 (PVIW…LTVA), 643-663 (LMEG…PFYI), 672-692 (HYFP…DILL), and 713-733 (SVLL…SYGM).

The protein belongs to the glycosyltransferase 39 family. Widely expressed. Has particularly strong expression in ovary, testis, liver, brain, muscle, heart and eye.

The protein resides in the endoplasmic reticulum membrane. The catalysed reaction is a di-trans,poly-cis-dolichyl beta-D-mannosyl phosphate + L-seryl-[protein] = 3-O-(alpha-D-mannosyl)-L-seryl-[protein] + a di-trans,poly-cis-dolichyl phosphate + H(+). It carries out the reaction a di-trans,poly-cis-dolichyl beta-D-mannosyl phosphate + L-threonyl-[protein] = 3-O-(alpha-D-mannosyl)-L-threonyl-[protein] + a di-trans,poly-cis-dolichyl phosphate + H(+). It functions in the pathway protein modification; protein glycosylation. Its function is as follows. Transfers mannosyl residues to the hydroxyl group of serine or threonine residues. Coexpression of both POMT1 and POMT2 is necessary for enzyme activity, expression of either POMT1 or POMT2 alone is insufficient. The polypeptide is Protein O-mannosyl-transferase 2 (Danio rerio (Zebrafish)).